We begin with the raw amino-acid sequence, 1106 residues long: Exportin-T (1106 aa).

The tract at residues 336-357 (TPLESRTRTGPSAQNGQSDTSD) is disordered. A compositionally biased stretch (polar residues) spans 343–357 (RTGPSAQNGQSDTSD).

The protein belongs to the exportin family.

The protein localises to the nucleus. The protein resides in the cytoplasm. In terms of biological role, tRNA nucleus export receptor which facilitates tRNA translocation across the nuclear pore complex. Involved in pre-tRNA splicing, probably by affecting the interaction of pre-tRNA with splicing endonuclease. This chain is Exportin-T (LOS1), found in Mycosarcoma maydis (Corn smut fungus).